The sequence spans 968 residues: RNA polymerase-associated protein RapA (968 aa).

Residues 164-334 (DVGRRHAPRV…FARLRLLDPN (171 aa)) enclose the Helicase ATP-binding domain. Residue 177–184 (DEVGLGKT) coordinates ATP. The short motif at 280 to 283 (DEAH) is the DEAH box element. Residues 490–662 (RVEWLMGYLT…YLASPDQTEG (173 aa)) form the Helicase C-terminal domain.

Belongs to the SNF2/RAD54 helicase family. RapA subfamily. In terms of assembly, interacts with the RNAP. Has a higher affinity for the core RNAP than for the holoenzyme. Its ATPase activity is stimulated by binding to RNAP.

Transcription regulator that activates transcription by stimulating RNA polymerase (RNAP) recycling in case of stress conditions such as supercoiled DNA or high salt concentrations. Probably acts by releasing the RNAP, when it is trapped or immobilized on tightly supercoiled DNA. Does not activate transcription on linear DNA. Probably not involved in DNA repair. The polypeptide is RNA polymerase-associated protein RapA (Shigella dysenteriae serotype 1 (strain Sd197)).